A 513-amino-acid polypeptide reads, in one-letter code: ATP synthase subunit alpha 2 (513 aa).

Residue 169-176 (GDRQTGKT) participates in ATP binding.

It belongs to the ATPase alpha/beta chains family. As to quaternary structure, F-type ATPases have 2 components, CF(1) - the catalytic core - and CF(0) - the membrane proton channel. CF(1) has five subunits: alpha(3), beta(3), gamma(1), delta(1), epsilon(1). CF(0) has three main subunits: a(1), b(2) and c(9-12). The alpha and beta chains form an alternating ring which encloses part of the gamma chain. CF(1) is attached to CF(0) by a central stalk formed by the gamma and epsilon chains, while a peripheral stalk is formed by the delta and b chains.

The protein resides in the cell inner membrane. The enzyme catalyses ATP + H2O + 4 H(+)(in) = ADP + phosphate + 5 H(+)(out). In terms of biological role, produces ATP from ADP in the presence of a proton gradient across the membrane. The alpha chain is a regulatory subunit. The chain is ATP synthase subunit alpha 2 from Photobacterium profundum (strain SS9).